The following is a 436-amino-acid chain: GTPase Der (436 aa).

EngA-type G domains follow at residues 4–167 (PTVA…PVEE) and 175–351 (IRFS…ESQN). GTP-binding positions include 10–17 (GRPNVGKS), 57–61 (DTGGI), 119–122 (NKVD), 181–188 (GRPNVGKS), 229–233 (DTAGM), and 294–297 (NKWD). The KH-like domain occupies 352–436 (KRIPSAVLND…PIHLIARKRK (85 aa)).

It belongs to the TRAFAC class TrmE-Era-EngA-EngB-Septin-like GTPase superfamily. EngA (Der) GTPase family. As to quaternary structure, associates with the 50S ribosomal subunit.

In terms of biological role, GTPase that plays an essential role in the late steps of ribosome biogenesis. This is GTPase Der from Streptococcus pyogenes serotype M2 (strain MGAS10270).